The primary structure comprises 84 residues: UPF0291 protein EUBELI_00985 (84 aa).

The protein belongs to the UPF0291 family.

The protein resides in the cytoplasm. This is UPF0291 protein EUBELI_00985 from Lachnospira eligens (strain ATCC 27750 / DSM 3376 / VPI C15-48 / C15-B4) (Eubacterium eligens).